Reading from the N-terminus, the 371-residue chain is AA9 family lytic polysaccharide monooxygenase B (371 aa).

A signal peptide spans 1–25 (MSIAKIAGVVLGSAALVAGHGYVSG). Cu(2+)-binding residues include His-20 and His-104. 2 cysteine pairs are disulfide-bonded: Cys-74-Cys-194 and Cys-115-Cys-119. A glycan (N-linked (GlcNAc...) asparagine) is linked at Asn-154. The O2 site is built by His-180 and Gln-189. Position 191 (Tyr-191) interacts with Cu(2+). The disordered stretch occupies residues 304–332 (HVQATSSSAAASTPTASSGASSGSGSSSS). Positions 307–332 (ATSSSAAASTPTASSGASSGSGSSSS) are enriched in low complexity.

It belongs to the polysaccharide monooxygenase AA9 family. The cofactor is Cu(2+).

The protein localises to the secreted. The enzyme catalyses [(1-&gt;4)-beta-D-glucosyl]n+m + reduced acceptor + O2 = 4-dehydro-beta-D-glucosyl-[(1-&gt;4)-beta-D-glucosyl]n-1 + [(1-&gt;4)-beta-D-glucosyl]m + acceptor + H2O.. In terms of biological role, lytic polysaccharide monooxygenase (LPMO) that depolymerizes crystalline and amorphous polysaccharides via the oxidation of scissile alpha- or beta-(1-4)-glycosidic bonds, yielding C1 and C4 oxidation products. Catalysis by LPMOs requires the reduction of the active-site copper from Cu(II) to Cu(I) by a reducing agent and H(2)O(2) or O(2) as a cosubstrate. In addition to cellulose, also cleaves the beta-(1!4)-glucan backbone of tamarind xyloglucan, irrespective of substitutions which contrasts with AA9A xyloglucan cleavage activity. The chain is AA9 family lytic polysaccharide monooxygenase B from Aspergillus tamarii.